The chain runs to 115 residues: Cytochrome c oxidase subunit 3 (115 aa).

A run of 2 helical transmembrane segments spans residues C32–L52 and F70–I90.

Belongs to the cytochrome c oxidase subunit 3 family. In terms of assembly, component of the cytochrome c oxidase (complex IV, CIV), a multisubunit enzyme composed of a catalytic core of 3 subunits and several supernumerary subunits. The complex exists as a monomer or a dimer and forms supercomplexes (SCs) in the inner mitochondrial membrane with ubiquinol-cytochrome c oxidoreductase (cytochrome b-c1 complex, complex III, CIII).

It is found in the mitochondrion inner membrane. The catalysed reaction is 4 Fe(II)-[cytochrome c] + O2 + 8 H(+)(in) = 4 Fe(III)-[cytochrome c] + 2 H2O + 4 H(+)(out). Its function is as follows. Component of the cytochrome c oxidase, the last enzyme in the mitochondrial electron transport chain which drives oxidative phosphorylation. The respiratory chain contains 3 multisubunit complexes succinate dehydrogenase (complex II, CII), ubiquinol-cytochrome c oxidoreductase (cytochrome b-c1 complex, complex III, CIII) and cytochrome c oxidase (complex IV, CIV), that cooperate to transfer electrons derived from NADH and succinate to molecular oxygen, creating an electrochemical gradient over the inner membrane that drives transmembrane transport and the ATP synthase. Cytochrome c oxidase is the component of the respiratory chain that catalyzes the reduction of oxygen to water. Electrons originating from reduced cytochrome c in the intermembrane space (IMS) are transferred via the dinuclear copper A center (CU(A)) of subunit 2 and heme A of subunit 1 to the active site in subunit 1, a binuclear center (BNC) formed by heme A3 and copper B (CU(B)). The BNC reduces molecular oxygen to 2 water molecules using 4 electrons from cytochrome c in the IMS and 4 protons from the mitochondrial matrix. The polypeptide is Cytochrome c oxidase subunit 3 (COIII) (Artemia salina (Brine shrimp)).